A 349-amino-acid chain; its full sequence is tRNA-specific 2-thiouridylase MnmA (349 aa).

ATP is bound by residues 7–14 and Leu-33; that span reads GLSGGVDS. Catalysis depends on Cys-94, which acts as the Nucleophile. Residues Cys-94 and Cys-193 are joined by a disulfide bond. Gly-119 contributes to the ATP binding site. The tract at residues 143-145 is interaction with tRNA; the sequence is KDQ. Residue Cys-193 is the Cysteine persulfide intermediate of the active site. Residues 298–299 form an interaction with tRNA region; sequence RY.

It belongs to the MnmA/TRMU family.

Its subcellular location is the cytoplasm. The enzyme catalyses S-sulfanyl-L-cysteinyl-[protein] + uridine(34) in tRNA + AH2 + ATP = 2-thiouridine(34) in tRNA + L-cysteinyl-[protein] + A + AMP + diphosphate + H(+). In terms of biological role, catalyzes the 2-thiolation of uridine at the wobble position (U34) of tRNA, leading to the formation of s(2)U34. This chain is tRNA-specific 2-thiouridylase MnmA, found in Gloeothece citriformis (strain PCC 7424) (Cyanothece sp. (strain PCC 7424)).